A 1351-amino-acid polypeptide reads, in one-letter code: ABC transporter C family member 6 (1351 aa).

One can recognise an ABC transmembrane type-1 1 domain in the interval 112 to 397 (NKYALVSNLF…LPYDIFKAIG (286 aa)). Helical transmembrane passes span 120–140 (LFII…INYI), 149–169 (SILK…GQSI), and 248–268 (LLCY…VIAL). One can recognise an ABC transporter 1 domain in the interval 474-700 (NQDESINKKE…GIDFKSILKT (227 aa)). 510 to 517 (GVVGSGKT) provides a ligand contact to ATP. Positions 701-734 (KEIKKNVENETDSEELIKNEIEIENEIIDVNNAI) form a coiled coil. Transmembrane regions (helical) follow at residues 771–791 (GSSG…QAIF), 815–835 (IGYY…RILL), 904–924 (LISI…LSIA), 977–999 (MFDN…RWVS), 1002–1022 (LEVM…LFIS), and 1025–1045 (GLAA…SWGI). Positions 777–1060 (LFITISLFFV…LEVKMNSFQR (284 aa)) constitute an ABC transmembrane type-1 2 domain. The 236-residue stretch at 1101 to 1336 (IEFKNVEIKY…PNSKFNKLIK (236 aa)) folds into the ABC transporter 2 domain. 1135 to 1142 (GRTGAGKT) contacts ATP.

The protein belongs to the ABC transporter superfamily. ABCC family. Conjugate transporter (TC 3.A.1.208) subfamily.

The protein localises to the membrane. This is ABC transporter C family member 6 (abcC6) from Dictyostelium discoideum (Social amoeba).